Consider the following 254-residue polypeptide: Type III pantothenate kinase (254 aa).

ATP is bound at residue 7–14 (DIGNTRLK). Residues Tyr-97 and 104–107 (GSDR) contribute to the substrate site. Catalysis depends on Asp-106, which acts as the Proton acceptor. Thr-134 serves as a coordination point for ATP. Thr-184 is a binding site for substrate.

This sequence belongs to the type III pantothenate kinase family. Homodimer. NH4(+) serves as cofactor. It depends on K(+) as a cofactor.

The protein resides in the cytoplasm. The enzyme catalyses (R)-pantothenate + ATP = (R)-4'-phosphopantothenate + ADP + H(+). It functions in the pathway cofactor biosynthesis; coenzyme A biosynthesis; CoA from (R)-pantothenate: step 1/5. Functionally, catalyzes the phosphorylation of pantothenate (Pan), the first step in CoA biosynthesis. In Methylibium petroleiphilum (strain ATCC BAA-1232 / LMG 22953 / PM1), this protein is Type III pantothenate kinase.